The chain runs to 272 residues: NH(3)-dependent NAD(+) synthetase (272 aa).

45 to 52 serves as a coordination point for ATP; it reads GISGGQDS. D51 is a Mg(2+) binding site. Residue R138 participates in deamido-NAD(+) binding. Residue T158 coordinates ATP. E163 contributes to the Mg(2+) binding site. Deamido-NAD(+) contacts are provided by K171 and D178. ATP is bound by residues K187 and T209. A deamido-NAD(+)-binding site is contributed by 258–259; that stretch reads HK.

This sequence belongs to the NAD synthetase family. As to quaternary structure, homodimer.

The catalysed reaction is deamido-NAD(+) + NH4(+) + ATP = AMP + diphosphate + NAD(+) + H(+). It functions in the pathway cofactor biosynthesis; NAD(+) biosynthesis; NAD(+) from deamido-NAD(+) (ammonia route): step 1/1. Catalyzes the ATP-dependent amidation of deamido-NAD to form NAD. Uses ammonia as a nitrogen source. The polypeptide is NH(3)-dependent NAD(+) synthetase (Bacillus thuringiensis subsp. konkukian (strain 97-27)).